Consider the following 600-residue polypeptide: ATP-dependent RNA helicase DDX55 (600 aa).

Positions 9–37 (WESLPVPLHPQVLGALRELGFPYMTPVQS) match the Q motif motif. The 184-residue stretch at 40-223 (IPLFMRNKDV…RAGLRNPVRV (184 aa)) folds into the Helicase ATP-binding domain. ATP is bound at residue 53–60 (AVTGSGKT). Residues 171 to 174 (DEAD) carry the DEAD box motif. A Helicase C-terminal domain is found at 254–402 (KFNQLVHFLR…EMKPQRNTAD (149 aa)). Residues 500–513 (EQQRREKTENEGRR) show a composition bias toward basic and acidic residues. The tract at residues 500 to 550 (EQQRREKTENEGRRKFIKNKAWSKQKAKKEKKKKMNEKRKREEGSDIEDED) is disordered. A compositionally biased stretch (basic residues) spans 514–537 (KFIKNKAWSKQKAKKEKKKKMNEK). An important for nuclear localization region spans residues 533 to 562 (KMNEKRKREEGSDIEDEDMEELLNDTRLLK). Phosphoserine is present on residues Ser-544 and Ser-594.

The protein belongs to the DEAD box helicase family. DDX55/SPB4 subfamily. In terms of assembly, interacts with 28S rRNA. Interacts with double-stranded RNA substrates in vitro; the interaction stimulates ATPase activity.

The protein localises to the nucleus. It is found in the nucleoplasm. It carries out the reaction ATP + H2O = ADP + phosphate + H(+). In terms of biological role, probable ATP-binding RNA helicase. Has ATPase activity and is involved in the maturation of precursor large subunit rRNAs. The protein is ATP-dependent RNA helicase DDX55 of Homo sapiens (Human).